The chain runs to 414 residues: 2,3-diketo-5-methylthiopentyl-1-phosphate enolase (414 aa).

The active-site Proton acceptor is the Lys-99. Residues Lys-148, 174 to 177, His-265, Gly-338, and 360 to 361 each bind substrate; these read KDDE and GG. Lys-174, Asp-176, and Glu-177 together coordinate Mg(2+). The residue at position 174 (Lys-174) is an N6-carboxylysine.

This sequence belongs to the RuBisCO large chain family. Type IV subfamily. Homodimer. The cofactor is Mg(2+).

The enzyme catalyses 5-methylsulfanyl-2,3-dioxopentyl phosphate = 2-hydroxy-5-methylsulfanyl-3-oxopent-1-enyl phosphate. The protein operates within amino-acid biosynthesis; L-methionine biosynthesis via salvage pathway; L-methionine from S-methyl-5-thio-alpha-D-ribose 1-phosphate: step 3/6. Its function is as follows. Catalyzes the enolization of 2,3-diketo-5-methylthiopentyl-1-phosphate (DK-MTP-1-P) into 2-hydroxy-3-keto-5-methylthiopentenyl-1-phosphate (HK-MTPenyl-1-P). The polypeptide is 2,3-diketo-5-methylthiopentyl-1-phosphate enolase (Bacillus cytotoxicus (strain DSM 22905 / CIP 110041 / 391-98 / NVH 391-98)).